The following is a 151-amino-acid chain: Transcriptional regulator MraZ (151 aa).

SpoVT-AbrB domains are found at residues 5-52 and 81-124; these read ATAV…PLDE and ATEC…SDVE.

The protein belongs to the MraZ family. As to quaternary structure, forms oligomers.

The protein localises to the cytoplasm. It is found in the nucleoid. The protein is Transcriptional regulator MraZ of Haemophilus influenzae (strain 86-028NP).